The primary structure comprises 185 residues: uncharacterized protein (185 aa).

The N-terminal stretch at 1–29 (MKNQEIIEVKSKMFLRIWAFVGSAGMGLA) is a signal peptide. The N-palmitoyl cysteine moiety is linked to residue Cys-30. Cys-30 is lipidated: S-diacylglycerol cysteine. A helical membrane pass occupies residues 45 to 67 (YLLAIPAGFLFTLFCLYLFIIFF).

It to B.subtilis YfjE.

The protein resides in the cell membrane. This is an uncharacterized protein from Bacillus subtilis (strain 168).